The sequence spans 161 residues: Cyclic pyranopterin monophosphate synthase (161 aa).

Residues 75 to 77 and 114 to 115 contribute to the substrate site; these read MCH and ME. Residue aspartate 129 is part of the active site.

It belongs to the MoaC family. As to quaternary structure, homohexamer; trimer of dimers.

The enzyme catalyses (8S)-3',8-cyclo-7,8-dihydroguanosine 5'-triphosphate = cyclic pyranopterin phosphate + diphosphate. Its pathway is cofactor biosynthesis; molybdopterin biosynthesis. Its function is as follows. Catalyzes the conversion of (8S)-3',8-cyclo-7,8-dihydroguanosine 5'-triphosphate to cyclic pyranopterin monophosphate (cPMP). This chain is Cyclic pyranopterin monophosphate synthase, found in Staphylococcus carnosus (strain TM300).